A 222-amino-acid polypeptide reads, in one-letter code: Kinetochore protein Spc25 (222 aa).

Positions 51 to 100 form a coiled coil; sequence RHQRKVGKLQKVIMERREELDKRVSFIEELDRELEATKLRSLAMKDRIKQ.

This sequence belongs to the SPC25 family. Component of the Ndc80 complex, which is composed of Ndc80, Nuf2 and Spc25.

Its subcellular location is the nucleus. It localises to the chromosome. The protein resides in the centromere. It is found in the kinetochore. Functionally, acts as a component of the essential kinetochore-associated Ndc80 complex, which is required for chromosome segregation and spindle checkpoint activity during meiosis and mitosis. Required for kinetochore integrity and the organization of stable microtubule binding sites in the outer plate of the kinetochore. Participates in SAC signaling that responds specifically to disruptions in spindle microtubule dynamics. The NDC80 complex synergistically enhances the affinity of the SKA1 complex for microtubules and may allow the NDC80 complex to track depolymerizing microtubules. This Drosophila sechellia (Fruit fly) protein is Kinetochore protein Spc25.